The following is a 482-amino-acid chain: Pentatricopeptide repeat-containing protein At1g74900, mitochondrial (482 aa).

11 PPR repeats span residues 90–124, 125–159, 160–190, 194–228, 229–263, 264–298, 299–333, 334–368, 369–403, 404–441, and 442–476; these read DASSFDLAIDIAARLHLHPTVWSLIHRMRSLRIGP, SPKTFAIVAERYASAGKPDKAVKLFLNMHEHGCFQ, DLASFNTILDVLCKSKRVEKAYELFRALRGR, DTVTYNVILNGWCLIKRTPKALEVLKEMVERGINP, NLTTYNTMLKGFFRAGQIRHAWEFFLEMKKRDCEI, DVVTYTTVVHGFGVAGEIKRARNVFDEMIREGVLP, SVATYNAMIQVLCKKDNVENAVVMFEEMVRRGYEP, NVTTYNVLIRGLFHAGEFSRGEELMQRMENEGCEP, NFQTYNMMIRYYSECSEVEKALGLFEKMGSGDCLP, NLDTYNILISGMFVRKRSEDMVVAGKLLLEMVERGFIP, and RKFTFNRVLNGLLLTGNQAFAKEILRLQSKSGSRL.

It belongs to the PPR family. P subfamily.

It localises to the mitochondrion. Functionally, required for the trans-splicing of intron 1 of the mitochondrial nad1 transcript encoding the ND1 subunit of the mitochondrial membrane respiratory chain NADH dehydrogenase (Complex I). This is Pentatricopeptide repeat-containing protein At1g74900, mitochondrial (OTP43) from Arabidopsis thaliana (Mouse-ear cress).